A 59-amino-acid chain; its full sequence is Small ribosomal subunit protein bS21 (59 aa).

Belongs to the bacterial ribosomal protein bS21 family.

The protein is Small ribosomal subunit protein bS21 of Acholeplasma laidlawii (strain PG-8A).